The primary structure comprises 252 residues: Thiazole synthase (252 aa).

Lys98 (schiff-base intermediate with DXP) is an active-site residue. 1-deoxy-D-xylulose 5-phosphate contacts are provided by residues Gly159, 185–186 (AG), and 207–208 (AT).

This sequence belongs to the ThiG family. As to quaternary structure, homotetramer. Forms heterodimers with either ThiH or ThiS.

It localises to the cytoplasm. The enzyme catalyses [ThiS sulfur-carrier protein]-C-terminal-Gly-aminoethanethioate + 2-iminoacetate + 1-deoxy-D-xylulose 5-phosphate = [ThiS sulfur-carrier protein]-C-terminal Gly-Gly + 2-[(2R,5Z)-2-carboxy-4-methylthiazol-5(2H)-ylidene]ethyl phosphate + 2 H2O + H(+). Its pathway is cofactor biosynthesis; thiamine diphosphate biosynthesis. Catalyzes the rearrangement of 1-deoxy-D-xylulose 5-phosphate (DXP) to produce the thiazole phosphate moiety of thiamine. Sulfur is provided by the thiocarboxylate moiety of the carrier protein ThiS. In vitro, sulfur can be provided by H(2)S. This Mycolicibacterium smegmatis (strain ATCC 700084 / mc(2)155) (Mycobacterium smegmatis) protein is Thiazole synthase.